The chain runs to 942 residues: Diacylglycerol kinase theta (942 aa).

Residues 1-59 form a disordered region; the sequence is MAAAAEPGARAWLGGGSPRPGSPACSPVLGSGGRARPGPGPGPGPERAGVRAPGPAAAP. Phosphoserine is present on residues Ser22 and Ser26. Residues 45–59 show a composition bias toward low complexity; the sequence is PERAGVRAPGPAAAP. Phorbol-ester/DAG-type zinc fingers lie at residues 60 to 108, 121 to 168, and 183 to 234; these read GHSF…RIPC, AHCF…CSDC, and HHHW…APEC. The disordered stretch occupies residues 269–295; sequence EPGEGGDGADGSAAVGPGRETQATPES. The Ras-associating domain occupies 395–494; sequence AQEVLKIYPG…TRFYVAESRD (100 aa). 2 consecutive short sequence motifs (LXXLL motif) follow at residues 555 to 559 and 574 to 578; these read LYMLL and LPDLL. Residues 584–721 enclose the DAGKc domain; that stretch reads PDSCPLLVFV…MDRWTILLDA (138 aa). The tract at residues 908 to 942 is disordered; the sequence is PKVHMLRKAKQKPRRAGTTRDARADAAPAPESDPR. Over residues 911 to 924 the composition is skewed to basic residues; it reads HMLRKAKQKPRRAG. Low complexity predominate over residues 932-942; that stretch reads DAAPAPESDPR.

Belongs to the eukaryotic diacylglycerol kinase family. As to quaternary structure, interacts with RHOA (constitutively activated, GTP-bound); the interaction inhibits DGKQ. Interacts with PRKCE. Interacts with PRKCH. Interacts with PLCB1. Interacts with NR5A1; the interaction requires both LXXLL motifs in DGKQ and is required for full phosphatidic acid-mediated activation of NR5A1. Post-translationally, phosphorylated by PRKCE and PRKCH in vitro.

It localises to the cytoplasm. Its subcellular location is the cytosol. It is found in the cell membrane. The protein localises to the synapse. The protein resides in the cytoskeleton. It localises to the nucleus. Its subcellular location is the nucleus speckle. It is found in the nucleus matrix. It carries out the reaction a 1,2-diacyl-sn-glycerol + ATP = a 1,2-diacyl-sn-glycero-3-phosphate + ADP + H(+). It catalyses the reaction a 1-O-alkyl-sn-glycerol + ATP = a 1-O-alkyl-sn-glycero-3-phosphate + ADP + H(+). The enzyme catalyses 1-O-alkyl-2-acyl-sn-glycerol + ATP = 1-O-alkyl-2-acyl-sn-glycero-3-phosphate + ADP + H(+). The catalysed reaction is 1,2-di-(9Z-octadecenoyl)-sn-glycerol + ATP = 1,2-di-(9Z-octadecenoyl)-sn-glycero-3-phosphate + ADP + H(+). It carries out the reaction 1-O-hexadecyl-sn-glycerol + ATP = 1-O-hexadecyl-sn-glycero-3-phosphate + ADP + H(+). It catalyses the reaction 1-O-hexadecyl-2-acetyl-sn-glycerol + ATP = 1-O-hexadecyl-2-acetyl-sn-glycero-3-phosphate + ADP + H(+). The enzyme catalyses 1-octadecanoyl-2-(5Z,8Z,11Z,14Z-eicosatetraenoyl)-sn-glycerol + ATP = 1-octadecanoyl-2-(5Z,8Z,11Z,14Z-eicosatetraenoyl)-sn-glycero-3-phosphate + ADP + H(+). It functions in the pathway lipid metabolism; glycerolipid metabolism. With respect to regulation, activated by phosphatidylserine. Functionally, diacylglycerol kinase that converts diacylglycerol/DAG into phosphatidic acid/phosphatidate/PA and regulates the respective levels of these two bioactive lipids. Thereby, acts as a central switch between the signaling pathways activated by these second messengers with different cellular targets and opposite effects in numerous biological processes. Within the adrenocorticotropic hormone signaling pathway, produces phosphatidic acid which in turn activates NR5A1 and subsequent steroidogenic gene transcription. Also functions downstream of the nerve growth factor signaling pathway being specifically activated in the nucleus by the growth factor. Through its diacylglycerol activity also regulates synaptic vesicle endocytosis. This chain is Diacylglycerol kinase theta, found in Homo sapiens (Human).